Consider the following 292-residue polypeptide: 4-hydroxy-tetrahydrodipicolinate synthase (292 aa).

T45 lines the pyruvate pocket. Y133 (proton donor/acceptor) is an active-site residue. The active-site Schiff-base intermediate with substrate is K161. Position 203 (I203) interacts with pyruvate.

The protein belongs to the DapA family. In terms of assembly, homotetramer; dimer of dimers.

It localises to the cytoplasm. It catalyses the reaction L-aspartate 4-semialdehyde + pyruvate = (2S,4S)-4-hydroxy-2,3,4,5-tetrahydrodipicolinate + H2O + H(+). Its pathway is amino-acid biosynthesis; L-lysine biosynthesis via DAP pathway; (S)-tetrahydrodipicolinate from L-aspartate: step 3/4. Functionally, catalyzes the condensation of (S)-aspartate-beta-semialdehyde [(S)-ASA] and pyruvate to 4-hydroxy-tetrahydrodipicolinate (HTPA). The polypeptide is 4-hydroxy-tetrahydrodipicolinate synthase (Nitrosococcus oceani (strain ATCC 19707 / BCRC 17464 / JCM 30415 / NCIMB 11848 / C-107)).